The following is a 312-amino-acid chain: Phospholipid phosphatase 3 (312 aa).

Residues 1–33 (MQSYKYDKAIVPESKNGGSPALNNNPRKGGSKR) lie on the Cytoplasmic side of the membrane. The residue at position 19 (Ser19) is a Phosphoserine. Residues 34–54 (VLLICLDLFCLFMAALPFLII) form a helical membrane-spanning segment. Topologically, residues 55–85 (ETSTIKPYRRGFYCNDESIKYPLKVSETIND) are extracellular. A helical transmembrane segment spans residues 86 to 106 (AVLCAVGIVIAILAIITGEFY). The Cytoplasmic portion of the chain corresponds to 107 to 123 (RIYYLKEKSRSTTQNPY). The Dityrosine basolateral targeting motif motif lies at 109–110 (YY). The helical transmembrane segment at 124–144 (VAALYKQVGCFLFGCAISQSF) threads the bilayer. Residues 145–194 (TDIAKVSIGRLRPHFLSVCDPDFSQINCSEGYIQNYRCRGEDSKVQEARK) are Extracellular-facing. Residues 149–157 (KVSIGRLRP) are phosphatase sequence motif I. Asn171 carries N-linked (GlcNAc...) asparagine glycosylation. The Integrin-binding motif motif lies at 183–185 (RGE). Residues 195-215 (SFFSGHASFSMFTMLYLVLYL) form a helical membrane-spanning segment. Residues 197 to 200 (FSGH) form a phosphatase sequence motif II region. The active-site Proton donors is His200. Over 216–226 (QARFTWRGARL) the chain is Cytoplasmic. A helical membrane pass occupies residues 227–244 (LRPLLQFTLLMMAFYTGL). Residues 245–256 (SRVSDYKHHPSD) form a phosphatase sequence motif III region. The Extracellular segment spans residues 245–258 (SRVSDYKHHPSDVL). His252 (nucleophile) is an active-site residue. Residues 259-279 (AGFAQGALVACCIVFFVSDLF) traverse the membrane as a helical segment. The segment at 276–312 (SDLFKTKTSLSLPAPAIRREILSPVDIIDRNNHHNMV) is mediates interaction with CTNND1. Residues 280–312 (KTKTSLSLPAPAIRREILSPVDIIDRNNHHNMV) lie on the Cytoplasmic side of the membrane.

Belongs to the PA-phosphatase related phosphoesterase family. As to quaternary structure, forms functional homodimers and homooligomers that are not required for substrate recognition and catalytic activity. Can also form heterooligomers with other PLPP2 and PLPP3. Interacts with CTNND1; negatively regulates the PLPP3-mediated stabilization of beta-catenin/CTNNB1. Post-translationally, N-glycosylated. Contains high-mannose oligosaccharides. As to expression, detected in lung, cerebellum and heart atrium.

The protein localises to the cell membrane. It is found in the basolateral cell membrane. Its subcellular location is the endoplasmic reticulum membrane. It localises to the endoplasmic reticulum-Golgi intermediate compartment membrane. The protein resides in the golgi apparatus membrane. The protein localises to the golgi apparatus. It is found in the trans-Golgi network membrane. Its subcellular location is the membrane raft. The enzyme catalyses a 1,2-diacyl-sn-glycero-3-phosphate + H2O = a 1,2-diacyl-sn-glycerol + phosphate. It carries out the reaction 1,2-dihexadecanoyl-sn-glycero-3-phosphate + H2O = 1,2-dihexadecanoyl-sn-glycerol + phosphate. It catalyses the reaction 1,2-di-(9Z-octadecenoyl)-sn-glycero-3-phosphate + H2O = 1,2-di-(9Z-octadecenoyl)-sn-glycerol + phosphate. The catalysed reaction is a monoacyl-sn-glycero-3-phosphate + H2O = a monoacylglycerol + phosphate. The enzyme catalyses (9Z)-octadecenoyl-sn-glycero-3-phosphate + H2O = (9Z-octadecenoyl)-glycerol + phosphate. It carries out the reaction sphing-4-enine 1-phosphate + H2O = sphing-4-enine + phosphate. It catalyses the reaction an N-acylsphing-4-enine 1-phosphate + H2O = an N-acylsphing-4-enine + phosphate. The catalysed reaction is N-(octanoyl)-sphing-4-enine-1-phosphate + H2O = N-octanoylsphing-4-enine + phosphate. The enzyme catalyses N-(9Z-octadecenoyl)-ethanolamine phosphate + H2O = N-(9Z-octadecenoyl) ethanolamine + phosphate. The protein operates within lipid metabolism; phospholipid metabolism. Its activity is regulated as follows. Magnesium-independent phospholipid phosphatase. Insensitive to N-ethylmaleimide. Magnesium-independent phospholipid phosphatase of the plasma membrane that catalyzes the dephosphorylation of a variety of glycerolipid and sphingolipid phosphate esters including phosphatidate/PA, lysophosphatidate/LPA, diacylglycerol pyrophosphate/DGPP, sphingosine 1-phosphate/S1P and ceramide 1-phosphate/C1P. Also acts on N-oleoyl ethanolamine phosphate/N-(9Z-octadecenoyl)-ethanolamine phosphate, a potential physiological compound. Has both an extracellular and an intracellular phosphatase activity, allowing the hydrolysis and the cellular uptake of these bioactive lipid mediators from the milieu, regulating signal transduction in different cellular processes. Through the dephosphorylation of extracellular sphingosine-1-phosphate and the regulation of its extra- and intracellular availability, plays a role in vascular homeostasis, regulating endothelial cell migration, adhesion, survival, proliferation and the production of pro-inflammatory cytokines. By maintaining the appropriate levels of this lipid in the cerebellum, also ensure its proper development and function. Through its intracellular lipid phosphatase activity may act in early compartments of the secretory pathway, regulating the formation of Golgi to endoplasmic reticulum retrograde transport carriers. In terms of biological role, independently of this phosphatase activity may also function in the Wnt signaling pathway and the stabilization of beta-catenin/CTNNB1, thereby regulating cell proliferation, migration and differentiation in angiogenesis or yet in tumor growth. Also plays a role in integrin-mediated cell-cell adhesion in angiogenesis. The polypeptide is Phospholipid phosphatase 3 (Mus musculus (Mouse)).